The following is a 424-amino-acid chain: Protein UL117 (424 aa).

The disordered stretch occupies residues 57–82 (IVPTTSSSLAPPRDDERRPTPPLRPP).

Belongs to the herpesviridae U84 family.

It is found in the host nucleus. Its function is as follows. Plays a role in the inhibition of host DNA replication in the infected cell. Targets the mini-chromosome maintenance (MCM) complex and blocks the accumulation of MCM proteins and their loading onto host chromatin. The sequence is that of Protein UL117 (UL117) from Human cytomegalovirus (strain AD169) (HHV-5).